The following is a 77-amino-acid chain: Protein ImpC (77 aa).

Belongs to the DinI family.

This Salmonella typhimurium protein is Protein ImpC (impC).